A 435-amino-acid chain; its full sequence is Mitochondrial association factor 1 form a1 (435 aa).

The N-terminal stretch at 1–20 is a signal peptide; that stretch reads MWRIWRCRLSFLFATGCLLG. Over 21-96 the chain is Vacuolar; that stretch reads ALTAGLGSQM…VTARRRRNRR (76 aa). The helical transmembrane segment at 97 to 117 threads the bilayer; the sequence is IALIATAVGVAVILAALYVLR. Over 118 to 435 the chain is Cytoplasmic; that stretch reads RRRAQPPQEP…ERTYTFPQGD (318 aa). The interval 120–159 is disordered; that stretch reads RAQPPQEPEPPTRLRTPRPRAPSGQQQPSESEPPAGVPMT.

In terms of assembly, interacts with host SAMM50.

Its subcellular location is the parasitophorous vacuole membrane. Its function is as follows. During host cell infection by tachyzoites, does not play a role in tethering the parasitophorous vacuole to the host mitochondria, probably because it does not bind host mitochondrial import protein TOMM70. In Toxoplasma gondii (strain ATCC 50611 / Me49), this protein is Mitochondrial association factor 1 form a1.